A 206-amino-acid polypeptide reads, in one-letter code: Sec-independent protein translocase protein TatB (206 aa).

Residues 1 to 21 (MFDIGWTELLVIAVVLIVVVG) traverse the membrane as a helical segment. Residues 104 to 206 (ENKTEVPSAA…VQTKKKKDEA (103 aa)) form a disordered region. The span at 110-124 (PSAAMSAPTPSMSLP) shows a compositional bias: low complexity. Pro residues predominate over residues 125–138 (ETPPVVPTPAPAPE). Composition is skewed to low complexity over residues 139-151 (PAAV…AAKP) and 187-196 (ARKPAAPKTP).

Belongs to the TatB family. The Tat system comprises two distinct complexes: a TatABC complex, containing multiple copies of TatA, TatB and TatC subunits, and a separate TatA complex, containing only TatA subunits. Substrates initially bind to the TatABC complex, which probably triggers association of the separate TatA complex to form the active translocon.

The protein localises to the cell inner membrane. Part of the twin-arginine translocation (Tat) system that transports large folded proteins containing a characteristic twin-arginine motif in their signal peptide across membranes. Together with TatC, TatB is part of a receptor directly interacting with Tat signal peptides. TatB may form an oligomeric binding site that transiently accommodates folded Tat precursor proteins before their translocation. This Rhizobium etli (strain ATCC 51251 / DSM 11541 / JCM 21823 / NBRC 15573 / CFN 42) protein is Sec-independent protein translocase protein TatB.